Consider the following 400-residue polypeptide: NADH-ubiquinone oxidoreductase 49 kDa subunit (400 aa).

Belongs to the complex I 49 kDa subunit family.

Its subcellular location is the mitochondrion. The catalysed reaction is a ubiquinone + NADH + 5 H(+)(in) = a ubiquinol + NAD(+) + 4 H(+)(out). Its function is as follows. Core subunit of the mitochondrial membrane respiratory chain NADH dehydrogenase (Complex I) that is believed to belong to the minimal assembly required for catalysis. Complex I functions in the transfer of electrons from NADH to the respiratory chain. The immediate electron acceptor for the enzyme is believed to be ubiquinone. Component of the iron-sulfur (IP) fragment of the enzyme. Component of the iron-sulfur (IP) fragment of the enzyme. This Prototheca wickerhamii protein is NADH-ubiquinone oxidoreductase 49 kDa subunit (NAD7).